The following is an 802-amino-acid chain: MSFNHQEIEKKWQGYWEENKTFRTPDETEKPKFYALDMFPYPSGAGLHVGHPEGYTATDILSRMKRMQGYNVLHPMGWDAFGLPAEQYALDTGNSPAEFTEHNINTFRNQIKSLGFSYDWDREVNTTDPNYYKWTQWIFLKLFEKGLAYVDEVPVNWCPALGTVLANEEIIDGKSERGGHPVERRPMRQWMLKITAYGDRLLEDLDELDWPESLKDMQRNWIGRSEGAEVHFNIDGTDEKFTVFTTRPDTLFGATYCVLAPEHALVAEITTAEQKEAVEAYINAVKMKSDLERTELAKEKTGVFTGAYAVNPVNGEKLPIWIADYVLATYGTGAVMAVPAHDERDYEFASVFNLPMKEVVKGGDITKEVYTGDGAHVNSAFLDGLNKEEAIAKMIEWLEATSAGNQKVTYRLRDWLFSRQRYWGEPIPVIHWEDGTMTAVKEEELPLVLPKTENIRPSGTGESPLANIDEWVNVVDPETGKKGRRETNTMPQWAGSCWYYLRYIDPNNSEALVDPEKVKQWLPVDIYIGGAEHAVLHLLYARFWHKVLYDIGVVPTKEPFQQLFNQGMILGENNEKMSKSKGNVVNPDDIVASHGADTLRLYEMFMGPLDASIAWSENGLDGARRFLDRVWRLFVQDNGELSEKITDAPNKELEKAYHQTVKKVTEDYAELRFNTAISQMMVFINDAYKAETLPREYVEGFVKMIAPVAPHIGEELWSKLGYNETITYASWPTFDESKLVEDEVEIVVQVMGKVRAKLTMSKDASKEEMEQLALEAIQDQIEGKTVRKVIVVPGKLVNVVAN.

Residues 40 to 51 (PYPSGAGLHVGH) carry the 'HIGH' region motif. The 'KMSKS' region signature appears at 576-580 (KMSKS). Lys-579 contributes to the ATP binding site.

It belongs to the class-I aminoacyl-tRNA synthetase family.

The protein resides in the cytoplasm. It catalyses the reaction tRNA(Leu) + L-leucine + ATP = L-leucyl-tRNA(Leu) + AMP + diphosphate. This chain is Leucine--tRNA ligase, found in Bacillus cereus (strain ATCC 14579 / DSM 31 / CCUG 7414 / JCM 2152 / NBRC 15305 / NCIMB 9373 / NCTC 2599 / NRRL B-3711).